We begin with the raw amino-acid sequence, 78 residues long: Large ribosomal subunit protein bL28 (78 aa).

Belongs to the bacterial ribosomal protein bL28 family.

The protein is Large ribosomal subunit protein bL28 of Gloeothece citriformis (strain PCC 7424) (Cyanothece sp. (strain PCC 7424)).